The chain runs to 186 residues: UPF0200 protein Mbar_A0975 (186 aa).

8-15 provides a ligand contact to ATP; sequence GMPASGKS.

This sequence belongs to the UPF0200 family.

The protein is UPF0200 protein Mbar_A0975 of Methanosarcina barkeri (strain Fusaro / DSM 804).